We begin with the raw amino-acid sequence, 213 residues long: Adenylate kinase (213 aa).

10–15 contributes to the ATP binding site; sequence GAGKGT. The tract at residues 30-59 is NMP; it reads STGDMLRAALKEGTPLGLEAKKYMDQGALV. Residues Thr31, Arg36, 57–59, 85–88, and Gln92 contribute to the AMP site; these read ALV and GFPR. The interval 126–163 is LID; the sequence is GRRTCRSCGAGFHVMFDPPKTDGKCDKCGGELYQRDDD. Residue Arg127 participates in ATP binding. The Zn(2+) site is built by Cys130, Cys133, Cys150, and Cys153. AMP is bound by residues Arg160 and Arg171. Gly199 provides a ligand contact to ATP.

It belongs to the adenylate kinase family. As to quaternary structure, monomer.

The protein localises to the cytoplasm. The enzyme catalyses AMP + ATP = 2 ADP. Its pathway is purine metabolism; AMP biosynthesis via salvage pathway; AMP from ADP: step 1/1. In terms of biological role, catalyzes the reversible transfer of the terminal phosphate group between ATP and AMP. Plays an important role in cellular energy homeostasis and in adenine nucleotide metabolism. In Syntrophobacter fumaroxidans (strain DSM 10017 / MPOB), this protein is Adenylate kinase.